The following is a 197-amino-acid chain: ADP-ribosylation factor 1 (197 aa).

A lipid anchor (N-myristoyl glycine) is attached at Gly2. Residues 24-31 (GLDAAGKT), 67-71 (DVGGQ), and 126-129 (NKQD) contribute to the GTP site.

This sequence belongs to the small GTPase superfamily. Arf family.

It is found in the golgi apparatus. The catalysed reaction is GTP + H2O = GDP + phosphate + H(+). Functionally, GTP-binding protein involved in protein trafficking; may modulate vesicle budding and uncoating within the Golgi apparatus. This Solanum tuberosum (Potato) protein is ADP-ribosylation factor 1.